The following is a 448-amino-acid chain: Asparagine--tRNA ligase (448 aa).

The protein belongs to the class-II aminoacyl-tRNA synthetase family. As to quaternary structure, homodimer.

The protein resides in the cytoplasm. The catalysed reaction is tRNA(Asn) + L-asparagine + ATP = L-asparaginyl-tRNA(Asn) + AMP + diphosphate + H(+). The polypeptide is Asparagine--tRNA ligase (Streptococcus suis (strain 98HAH33)).